The primary structure comprises 699 residues: Auxin response factor 10 (699 aa).

3 disordered regions span residues 108-136 (AAEARREEENSRPRPTSFAKTLTQSDANN), 505-533 (TDLTIGSPGKPDDAACSPSSGGKKIDDTK), and 551-595 (KNGN…SWSL). Over residues 110-119 (EARREEENSR) the composition is skewed to basic and acidic residues. Polar residues predominate over residues 125 to 135 (FAKTLTQSDAN). Positions 125 to 227 (FAKTLTQSDA…NIHVGLRRAK (103 aa)) form a DNA-binding region, TF-B3. The span at 570–593 (PNTSEGSDSGVTQGSPTKNTTPSW) shows a compositional bias: polar residues. A PB1 domain is found at 613–693 (PGQCKVFVES…RKLRILTDAG (81 aa)).

This sequence belongs to the ARF family. As to quaternary structure, homodimers and heterodimers.

Its subcellular location is the nucleus. Its function is as follows. Auxin response factors (ARFs) are transcriptional factors that bind specifically to the DNA sequence 5'-TGTCTC-3' found in the auxin-responsive promoter elements (AuxREs). The protein is Auxin response factor 10 (ARF10) of Oryza sativa subsp. indica (Rice).